The sequence spans 142 residues: Large ribosomal subunit protein uL11 (142 aa).

It belongs to the universal ribosomal protein uL11 family. Part of the ribosomal stalk of the 50S ribosomal subunit. Interacts with L10 and the large rRNA to form the base of the stalk. L10 forms an elongated spine to which L12 dimers bind in a sequential fashion forming a multimeric L10(L12)X complex. Post-translationally, one or more lysine residues are methylated.

Forms part of the ribosomal stalk which helps the ribosome interact with GTP-bound translation factors. This chain is Large ribosomal subunit protein uL11, found in Edwardsiella ictaluri (strain 93-146).